The sequence spans 358 residues: Peptide chain release factor 1 (358 aa).

Residue Gln233 is modified to N5-methylglutamine.

Belongs to the prokaryotic/mitochondrial release factor family. Post-translationally, methylated by PrmC. Methylation increases the termination efficiency of RF1.

The protein localises to the cytoplasm. In terms of biological role, peptide chain release factor 1 directs the termination of translation in response to the peptide chain termination codons UAG and UAA. The protein is Peptide chain release factor 1 of Listeria monocytogenes serotype 4b (strain CLIP80459).